We begin with the raw amino-acid sequence, 626 residues long: Mitogen-activated protein kinase kinase kinase 3 (626 aa).

The PB1 domain occupies 44–123; that stretch reads DVRIKFEHNG…KSLRILLLSQ (80 aa). Disordered regions lie at residues 125–184 and 218–273; these read RNHT…YVPE and SSAE…VKGG. 4 stretches are compositionally biased toward polar residues: residues 128 to 137, 144 to 155, 165 to 174, and 219 to 247; these read TSSSPHSGVS, PSQSAGDINTIY, LSVSSQNPGR, and SAEN…QMSR. Phosphoserine occurs at positions 147 and 166. Residues serine 250 and serine 312 each carry the phosphoserine modification. The segment covering 250 to 270 has biased composition (basic and acidic residues); the sequence is SFPDNRKECSDRETQLYDKGV. Serine 337 carries the post-translational modification Phosphoserine; by SGK1. The residue at position 340 (serine 340) is a Phosphoserine. Residues 362-622 enclose the Protein kinase domain; the sequence is WRRGKLLGQG…AEELLTHHFA (261 aa). ATP contacts are provided by residues 368–376 and lysine 391; that span reads LGQGAFGRV. Aspartate 489 (proton acceptor) is an active-site residue.

The protein belongs to the protein kinase superfamily. STE Ser/Thr protein kinase family. MAP kinase kinase kinase subfamily. As to quaternary structure, binds both upstream activators and downstream substrates in multimolecular complexes. Part of a complex with MAP2K3, RAC1 and CCM2. Interacts with MAP2K5 and SPAG9. Mg(2+) serves as cofactor. Phosphorylation at Ser-166 and Ser-337 by SGK1 inhibits its activity.

The enzyme catalyses L-seryl-[protein] + ATP = O-phospho-L-seryl-[protein] + ADP + H(+). It carries out the reaction L-threonyl-[protein] + ATP = O-phospho-L-threonyl-[protein] + ADP + H(+). Its activity is regulated as follows. Activated by phosphorylation on Thr-530. Functionally, component of a protein kinase signal transduction cascade. Mediates activation of the NF-kappa-B, AP1 and DDIT3 transcriptional regulators. The protein is Mitogen-activated protein kinase kinase kinase 3 (Map3k3) of Mus musculus (Mouse).